Consider the following 243-residue polypeptide: Leucyl/phenylalanyl-tRNA--protein transferase (243 aa).

A disordered region spans residues 1-22 (MHSQPYLLSPTPNTPFPPAEHA).

It belongs to the L/F-transferase family.

The protein resides in the cytoplasm. The enzyme catalyses N-terminal L-lysyl-[protein] + L-leucyl-tRNA(Leu) = N-terminal L-leucyl-L-lysyl-[protein] + tRNA(Leu) + H(+). It carries out the reaction N-terminal L-arginyl-[protein] + L-leucyl-tRNA(Leu) = N-terminal L-leucyl-L-arginyl-[protein] + tRNA(Leu) + H(+). The catalysed reaction is L-phenylalanyl-tRNA(Phe) + an N-terminal L-alpha-aminoacyl-[protein] = an N-terminal L-phenylalanyl-L-alpha-aminoacyl-[protein] + tRNA(Phe). Its function is as follows. Functions in the N-end rule pathway of protein degradation where it conjugates Leu, Phe and, less efficiently, Met from aminoacyl-tRNAs to the N-termini of proteins containing an N-terminal arginine or lysine. In Xylella fastidiosa (strain M23), this protein is Leucyl/phenylalanyl-tRNA--protein transferase.